The following is a 200-amino-acid chain: Oligoribonuclease (200 aa).

The Exonuclease domain maps to 20-183 (LVWLDMEMTG…ADIHESIDEL (164 aa)). The active site involves Y141.

The protein belongs to the oligoribonuclease family.

The protein localises to the cytoplasm. Its function is as follows. 3'-to-5' exoribonuclease specific for small oligoribonucleotides. The polypeptide is Oligoribonuclease (Burkholderia vietnamiensis (strain G4 / LMG 22486) (Burkholderia cepacia (strain R1808))).